A 264-amino-acid polypeptide reads, in one-letter code: Ribonuclease H (264 aa).

The tract at residues 55-88 (GSRYSSSSGPYRRSTTSYGYSPYSSSSSNYSARH) is disordered. Positions 56–85 (SRYSSSSGPYRRSTTSYGYSPYSSSSSNYS) are enriched in low complexity. A Phosphoserine modification is found at Ser97. Residues 120-263 (CSDRQVVYAD…ADMLARRGAS (144 aa)) enclose the RNase H type-1 domain. Mg(2+) is bound by residues Asp129, Glu171, Asp191, and Asp255.

The protein belongs to the RNase H family. It depends on Mg(2+) as a cofactor.

It catalyses the reaction Endonucleolytic cleavage to 5'-phosphomonoester.. Endonuclease that specifically degrades the RNA of RNA-DNA hybrids. In Schizosaccharomyces pombe (strain 972 / ATCC 24843) (Fission yeast), this protein is Ribonuclease H (rnh1).